We begin with the raw amino-acid sequence, 272 residues long: Dermonecrotic toxin LvSicTox-alphaIC1bv (272 aa).

Histidine 5 is an active-site residue. Mg(2+) is bound by residues glutamate 25 and aspartate 27. Histidine 41 functions as the Nucleophile in the catalytic mechanism. 2 disulfide bridges follow: cysteine 45-cysteine 51 and cysteine 47-cysteine 189. Aspartate 84 lines the Mg(2+) pocket.

The protein belongs to the arthropod phospholipase D family. Class II subfamily. Mg(2+) is required as a cofactor. As to expression, expressed by the venom gland.

Its subcellular location is the secreted. It catalyses the reaction an N-(acyl)-sphingosylphosphocholine = an N-(acyl)-sphingosyl-1,3-cyclic phosphate + choline. The catalysed reaction is an N-(acyl)-sphingosylphosphoethanolamine = an N-(acyl)-sphingosyl-1,3-cyclic phosphate + ethanolamine. The enzyme catalyses a 1-acyl-sn-glycero-3-phosphocholine = a 1-acyl-sn-glycero-2,3-cyclic phosphate + choline. It carries out the reaction a 1-acyl-sn-glycero-3-phosphoethanolamine = a 1-acyl-sn-glycero-2,3-cyclic phosphate + ethanolamine. In terms of biological role, dermonecrotic toxins cleave the phosphodiester linkage between the phosphate and headgroup of certain phospholipids (sphingolipid and lysolipid substrates), forming an alcohol (often choline) and a cyclic phosphate. This toxin acts on sphingomyelin (SM). It may also act on ceramide phosphoethanolamine (CPE), lysophosphatidylcholine (LPC) and lysophosphatidylethanolamine (LPE), but not on lysophosphatidylserine (LPS), and lysophosphatidylglycerol (LPG). It acts by transphosphatidylation, releasing exclusively cyclic phosphate products as second products. Induces dermonecrosis, hemolysis, increased vascular permeability, edema, inflammatory response, and platelet aggregation. In Loxosceles variegata (Recluse spider), this protein is Dermonecrotic toxin LvSicTox-alphaIC1bv.